We begin with the raw amino-acid sequence, 286 residues long: ATP synthase gamma chain (286 aa).

Belongs to the ATPase gamma chain family. As to quaternary structure, F-type ATPases have 2 components, CF(1) - the catalytic core - and CF(0) - the membrane proton channel. CF(1) has five subunits: alpha(3), beta(3), gamma(1), delta(1), epsilon(1). CF(0) has three main subunits: a, b and c.

The protein localises to the cell membrane. In terms of biological role, produces ATP from ADP in the presence of a proton gradient across the membrane. The gamma chain is believed to be important in regulating ATPase activity and the flow of protons through the CF(0) complex. The sequence is that of ATP synthase gamma chain from Oceanobacillus iheyensis (strain DSM 14371 / CIP 107618 / JCM 11309 / KCTC 3954 / HTE831).